The sequence spans 530 residues: Ubiquitin carboxyl-terminal hydrolase 17-like protein 22 (530 aa).

A USP domain is found at 80–375; sequence AGLQNMGNTC…QAYVLFYIQK (296 aa). Cys89 (nucleophile) is an active-site residue. The active-site Proton acceptor is the His334. 2 stretches are compositionally biased toward basic and acidic residues: residues 382–392 and 398–412; these read SESVSRGREPR and DTDRRATQGELKRDH. Disordered stretches follow at residues 382–412 and 476–530; these read SESVSRGREPRALGAEDTDRRATQGELKRDH and KNHH…LVCQ. The span at 484–495 shows a compositional bias: low complexity; the sequence is SSLLKLSSTTPT. The span at 496–505 shows a compositional bias: polar residues; it reads HQESMNTGTL. Positions 510-524 are enriched in basic residues; it reads GRARRSKGKNKHSKR.

It belongs to the peptidase C19 family. USP17 subfamily.

It localises to the nucleus. It is found in the endoplasmic reticulum. It catalyses the reaction Thiol-dependent hydrolysis of ester, thioester, amide, peptide and isopeptide bonds formed by the C-terminal Gly of ubiquitin (a 76-residue protein attached to proteins as an intracellular targeting signal).. Deubiquitinating enzyme that removes conjugated ubiquitin from specific proteins to regulate different cellular processes that may include cell proliferation, progression through the cell cycle, apoptosis, cell migration, and the cellular response to viral infection. In Homo sapiens (Human), this protein is Ubiquitin carboxyl-terminal hydrolase 17-like protein 22 (USP17L22).